Reading from the N-terminus, the 462-residue chain is MQPLNIYNTLAREKQPFVPIEPGKVRMYVCGMTVYDYCHVGHARVMVVFDMVHRWLRAAGYEVTYVQNITDIDDKIIRRAVENGETIGELTTRFIQYMHEDAAALGVIRPDHEPRATDYVPQMLDMIGKLEAKGLAYQASDGDVNYSVRKFDGYGKLSGKSLEDLRAGERVSANDAKQDPLDFVLWKSAKASEPPESKWDSKWGAGRPGWHIECSAMSCALLGEHFDIHGGGADLQFPHHENEIAQSEGASGKPFVNLWMHNGFVRINDEKMSKSLGNFFTIREVLKAYDAEVVRFFILRAHYRSPLNYSDAHLDDARHALTRLYTALKDSQPGGCAVDWDEPHAKRFAEAMGDDFNTPIAMSVLFDLASEINRTGSTAAARQLKGLAGTLGLLERDPHTFLQGGKSADGPSPDEIEKLIAARKAAKAERNFAEADRIRAQLLEAGIVLEDKPGGATEWRRA.

C30 serves as a coordination point for Zn(2+). The 'HIGH' region signature appears at 32–42 (MTVYDYCHVGH). The Zn(2+) site is built by C214, H239, and E243. The 'KMSKS' region signature appears at 271–275 (KMSKS). Position 274 (K274) interacts with ATP.

This sequence belongs to the class-I aminoacyl-tRNA synthetase family. As to quaternary structure, monomer. Zn(2+) serves as cofactor.

It is found in the cytoplasm. The catalysed reaction is tRNA(Cys) + L-cysteine + ATP = L-cysteinyl-tRNA(Cys) + AMP + diphosphate. This chain is Cysteine--tRNA ligase, found in Cupriavidus taiwanensis (strain DSM 17343 / BCRC 17206 / CCUG 44338 / CIP 107171 / LMG 19424 / R1) (Ralstonia taiwanensis (strain LMG 19424)).